We begin with the raw amino-acid sequence, 359 residues long: Type-1 angiotensin II receptor A (359 aa).

The Extracellular segment spans residues M1–S25. The N-linked (GlcNAc...) asparagine glycan is linked to N4. Positions 15 and 17 each coordinate angiotensin II. 2 disulfide bridges follow: C18-C274 and C101-C180. Residues Y26–F55 traverse the membrane as a helical segment. The Cytoplasmic portion of the chain corresponds to Y56 to T61. The helical transmembrane segment at V62–A89 threads the bilayer. The Extracellular segment spans residues M90–N98. A helical transmembrane segment spans residues H99–D125. The Cytoplasmic portion of the chain corresponds to R126 to T141. A helical membrane pass occupies residues M142–I165. Residues H166–T190 are Extracellular-facing. R167 contributes to the angiotensin II binding site. N176 carries N-linked (GlcNAc...) asparagine glycosylation. Residues F182, H183, and Y184 each contribute to the angiotensin II site. Residue N188 is glycosylated (N-linked (GlcNAc...) asparagine). A helical transmembrane segment spans residues L191–T216. K199 contacts angiotensin II. The Cytoplasmic portion of the chain corresponds to L217–F239. The chain crosses the membrane as a helical span at residues R240–L268. Residues G269 to D278 are Extracellular-facing. A helical transmembrane segment spans residues I279–F304. Residues L305 to E359 lie on the Cytoplasmic side of the membrane. Residues S335–S347 show a composition bias toward polar residues. Residues S335–E359 form a disordered region. C355 is lipidated: S-palmitoyl cysteine.

It belongs to the G-protein coupled receptor 1 family. In terms of assembly, interacts with MAS1. Interacts with ARRB1. Interacts with FLNA (via filamin repeat 21); increases PKA-mediated phosphorylation of FLNA. C-terminal Ser or Thr residues may be phosphorylated.

It localises to the cell membrane. Receptor for angiotensin II, a vasoconstricting peptide, which acts as a key regulator of blood pressure and sodium retention by the kidney. The activated receptor in turn couples to G-alpha proteins G(q) (GNAQ, GNA11, GNA14 or GNA15) and thus activates phospholipase C and increases the cytosolic Ca(2+) concentrations, which in turn triggers cellular responses such as stimulation of protein kinase C. The polypeptide is Type-1 angiotensin II receptor A (Agtr1a) (Mus musculus (Mouse)).